The primary structure comprises 318 residues: Glycine--tRNA ligase alpha subunit (318 aa).

Residues 298 to 318 form a disordered region; sequence EAGGSSPSTSRQGEAPRGESQ. Positions 300–309 are enriched in polar residues; it reads GGSSPSTSRQ.

The protein belongs to the class-II aminoacyl-tRNA synthetase family. In terms of assembly, tetramer of two alpha and two beta subunits.

It localises to the cytoplasm. The catalysed reaction is tRNA(Gly) + glycine + ATP = glycyl-tRNA(Gly) + AMP + diphosphate. The protein is Glycine--tRNA ligase alpha subunit of Rhodopseudomonas palustris (strain BisB18).